We begin with the raw amino-acid sequence, 364 residues long: 3-isopropylmalate dehydrogenase (364 aa).

79-92 provides a ligand contact to NAD(+); the sequence is GPKWEHLPAAEQPE. 4 residues coordinate substrate: Arg100, Arg110, Arg139, and Asp228. Residues Asp228, Asp252, and Asp256 each contribute to the Mg(2+) site. 286–298 contributes to the NAD(+) binding site; sequence GSAPDIAGKDIAN.

This sequence belongs to the isocitrate and isopropylmalate dehydrogenases family. LeuB type 1 subfamily. Homodimer. It depends on Mg(2+) as a cofactor. Mn(2+) is required as a cofactor.

The protein localises to the cytoplasm. The catalysed reaction is (2R,3S)-3-isopropylmalate + NAD(+) = 4-methyl-2-oxopentanoate + CO2 + NADH. Its pathway is amino-acid biosynthesis; L-leucine biosynthesis; L-leucine from 3-methyl-2-oxobutanoate: step 3/4. Catalyzes the oxidation of 3-carboxy-2-hydroxy-4-methylpentanoate (3-isopropylmalate) to 3-carboxy-4-methyl-2-oxopentanoate. The product decarboxylates to 4-methyl-2 oxopentanoate. The chain is 3-isopropylmalate dehydrogenase from Sodalis glossinidius (strain morsitans).